Here is a 137-residue protein sequence, read N- to C-terminus: MRTLWIVAVLLVGVEGSLIQLGEMIFQEMGKGAAKKYGLYGCNCGMGRRGRPQDATDRCCSVHKCCYKKLTDCDPKTDRYSYSWENGDIVCGGDDPCTKEVCECDKAATICFRDNLDTYDKKYKIFPKFLCKKPEPC.

The N-terminal stretch at 1–16 is a signal peptide; sequence MRTLWIVAVLLVGVEG. 7 disulfide bridges follow: Cys-42–Cys-131, Cys-44–Cys-60, Cys-59–Cys-111, Cys-65–Cys-137, Cys-66–Cys-104, Cys-73–Cys-97, and Cys-91–Cys-102. Positions 121-133 are important for membrane-damaging activities in eukaryotes and bacteria; heparin-binding; that stretch reads KKYKIFPKFLCKK.

It belongs to the phospholipase A2 family. Group II subfamily. K49 sub-subfamily. Expressed by the venom gland.

Its subcellular location is the secreted. Snake venom phospholipase A2 homolog that lacks enzymatic activity. Is myotoxic and displays edema-inducing activities in mouse paw. A model of myotoxic mechanism has been proposed: an apo Lys49-PLA2 is activated by the entrance of a hydrophobic molecule (e.g. fatty acid) at the hydrophobic channel of the protein leading to a reorientation of a monomer. This reorientation causes a transition between 'inactive' to 'active' states, causing alignment of C-terminal and membrane-docking sites (MDoS) side-by-side and putting the membrane-disruption sites (MDiS) in the same plane, exposed to solvent and in a symmetric position for both monomers. The MDoS region stabilizes the toxin on membrane by the interaction of charged residues with phospholipid head groups. Subsequently, the MDiS region destabilizes the membrane with penetration of hydrophobic residues. This insertion causes a disorganization of the membrane, allowing an uncontrolled influx of ions (i.e. calcium and sodium), and eventually triggering irreversible intracellular alterations and cell death. The chain is Phospholipase A2 homolog PLA2-03 from Ovophis okinavensis (Ryukyu Island pit viper).